The following is a 114-amino-acid chain: Large ribosomal subunit protein bL20 (114 aa).

This sequence belongs to the bacterial ribosomal protein bL20 family.

Binds directly to 23S ribosomal RNA and is necessary for the in vitro assembly process of the 50S ribosomal subunit. It is not involved in the protein synthesizing functions of that subunit. The chain is Large ribosomal subunit protein bL20 from Parabacteroides distasonis (strain ATCC 8503 / DSM 20701 / CIP 104284 / JCM 5825 / NCTC 11152).